The following is a 130-amino-acid chain: ATP synthase epsilon chain, chloroplastic (130 aa).

This sequence belongs to the ATPase epsilon chain family. As to quaternary structure, F-type ATPases have 2 components, CF(1) - the catalytic core - and CF(0) - the membrane proton channel. CF(1) has five subunits: alpha(3), beta(3), gamma(1), delta(1), epsilon(1). CF(0) has three main subunits: a, b and c.

It is found in the plastid. The protein localises to the chloroplast thylakoid membrane. Its function is as follows. Produces ATP from ADP in the presence of a proton gradient across the membrane. The sequence is that of ATP synthase epsilon chain, chloroplastic from Emiliania huxleyi (Coccolithophore).